A 634-amino-acid polypeptide reads, in one-letter code: GTP-binding protein 4 (634 aa).

Ala-2 bears the N-acetylalanine mark. Residue Lys-103 is modified to N6-acetyllysine; alternate. Lys-103 participates in a covalent cross-link: Glycyl lysine isopeptide (Lys-Gly) (interchain with G-Cter in SUMO2); alternate. A Phosphoserine modification is found at Ser-122. The OBG-type G domain occupies 169 to 340 (RTLLLCGYPN…VKTEACDRLL (172 aa)). GTP contacts are provided by residues 175–182 (GYPNVGKS), 221–225 (DTPGI), and 289–292 (NKCD). Residue Lys-332 forms a Glycyl lysine isopeptide (Lys-Gly) (interchain with G-Cter in SUMO2) linkage. A phosphoserine mark is found at Ser-468, Ser-470, and Ser-472. The disordered stretch occupies residues 495–517 (ILESKEKNTQGPRMPRTAKKVQR). N6-acetyllysine is present on Lys-522. The tract at residues 529–634 (VDMDDKDDAH…KRKAGKKDRR (106 aa)) is disordered. Lys-534 participates in a covalent cross-link: Glycyl lysine isopeptide (Lys-Gly) (interchain with G-Cter in SUMO2). The segment covering 544–554 (RRSRSITRKRK) has biased composition (basic residues). Residue Ser-558 is modified to Phosphoserine. Residues 560–572 (PPSSVARSGSCSR) are compositionally biased toward polar residues. The segment covering 573–585 (TPRDVSGLRDVKM) has biased composition (basic and acidic residues). A compositionally biased stretch (basic residues) spans 586–604 (VKKAKTMMKNAQKKMNRLG). Positions 605–618 (KKGEADRHVFDMKP) are enriched in basic and acidic residues. Positions 619-634 (KHLLSGKRKAGKKDRR) are enriched in basic residues.

It belongs to the TRAFAC class OBG-HflX-like GTPase superfamily. OBG GTPase family. NOG subfamily. In terms of assembly, associates with pre-60S ribosomal particles. Interacts with MINAS-60 (product of an alternative open reading frame of RBM10).

The protein resides in the nucleus. It is found in the nucleolus. Its function is as follows. Involved in the biogenesis of the 60S ribosomal subunit. Acts as a TP53 repressor, preventing TP53 stabilization and cell cycle arrest. This Homo sapiens (Human) protein is GTP-binding protein 4.